We begin with the raw amino-acid sequence, 334 residues long: MEGRGGSRGGAMARGGGRGGFGGGRGGFGGGDRGGRGGGRGGFGGGDRGGRGGFGGGRGGRGGFGGGDRGGRGGARGGRGGARGGKPAAGGKPGAKVIVEKHPRHEGVFIVRGKEESLATLNSVPGESVYGEKRVSVGEGEDKKEYRIWNPFRSKIAAGLHRGVDEIHIKPGSKVLYIGAASGTTISHVSDIVGPTGVVYGIELSHRPGRDLIGMAKKRTNVIPIIEDARHPQKYRMLIGMVDVVFADVAQPNQAQIVAQNSAYFLKNEGHFIISIKASCIDSTAPTEVVVQNEITKLKKEKLRPQHLLKTLDPYERNHSLVIGVYRKFGSSEK.

The span at 1 to 93 shows a compositional bias: gly residues; sequence MEGRGGSRGG…GGKPAAGGKP (93 aa). The tract at residues 1–94 is disordered; that stretch reads MEGRGGSRGG…GKPAAGGKPG (94 aa). Residues 184 to 185, 203 to 204, 228 to 229, and 248 to 251 each bind S-adenosyl-L-methionine; these read TT, EL, DA, and DVAQ.

This sequence belongs to the methyltransferase superfamily. Fibrillarin family. Component of box C/D small nucleolar ribonucleoprotein (snoRNP) particles. It is associated with the U3, U8 and U13 small nuclear RNAs. Part of the small subunit (SSU) processome, composed of more than 70 proteins and the RNA chaperone small nucleolar RNA (snoRNA) U3. By homology to other fibrillarins, some or all of the N-terminal domain arginines are modified to asymmetric dimethylarginine (DMA).

It localises to the nucleus. The protein localises to the nucleolus. The enzyme catalyses L-glutaminyl-[histone H2A] + S-adenosyl-L-methionine = N(5)-methyl-L-glutaminyl-[histone H2A] + S-adenosyl-L-homocysteine + H(+). Its function is as follows. S-adenosyl-L-methionine-dependent methyltransferase that has the ability to methylate both RNAs and proteins. Involved in pre-rRNA processing. Utilizes the methyl donor S-adenosyl-L-methionine to catalyze the site-specific 2'-hydroxyl methylation of ribose moieties in pre-ribosomal RNA. Site specificity is provided by a guide RNA that base pairs with the substrate. Methylation occurs at a characteristic distance from the sequence involved in base pairing with the guide RNA. Also acts as a protein methyltransferase by mediating methylation of 'Gln-105' of histone H2A (H2AQ105me), a modification that impairs binding of the FACT complex and is specifically present at 35S ribosomal DNA locus. Part of the small subunit (SSU) processome, first precursor of the small eukaryotic ribosomal subunit. During the assembly of the SSU processome in the nucleolus, many ribosome biogenesis factors, an RNA chaperone and ribosomal proteins associate with the nascent pre-rRNA and work in concert to generate RNA folding, modifications, rearrangements and cleavage as well as targeted degradation of pre-ribosomal RNA by the RNA exosome. The sequence is that of rRNA 2'-O-methyltransferase fibrillarin (fbl) from Dictyostelium discoideum (Social amoeba).